The sequence spans 529 residues: Bifunctional purine biosynthesis protein PurH (529 aa).

The region spanning 1–146 (MAPTALLSVS…KNHAHVAVLT (146 aa)) is the MGS-like domain.

The protein belongs to the PurH family.

The catalysed reaction is (6R)-10-formyltetrahydrofolate + 5-amino-1-(5-phospho-beta-D-ribosyl)imidazole-4-carboxamide = 5-formamido-1-(5-phospho-D-ribosyl)imidazole-4-carboxamide + (6S)-5,6,7,8-tetrahydrofolate. The enzyme catalyses IMP + H2O = 5-formamido-1-(5-phospho-D-ribosyl)imidazole-4-carboxamide. Its pathway is purine metabolism; IMP biosynthesis via de novo pathway; 5-formamido-1-(5-phospho-D-ribosyl)imidazole-4-carboxamide from 5-amino-1-(5-phospho-D-ribosyl)imidazole-4-carboxamide (10-formyl THF route): step 1/1. The protein operates within purine metabolism; IMP biosynthesis via de novo pathway; IMP from 5-formamido-1-(5-phospho-D-ribosyl)imidazole-4-carboxamide: step 1/1. In Synechococcus sp. (strain CC9311), this protein is Bifunctional purine biosynthesis protein PurH.